Reading from the N-terminus, the 199-residue chain is NAD(P)H dehydrogenase (quinone) (199 aa).

Positions 4 to 190 (MLVLYYSAYG…DGARFQGRRV (187 aa)) constitute a Flavodoxin-like domain. FMN contacts are provided by residues 10-15 (SAYGYM) and 78-80 (TRY). Y12 is an NAD(+) binding site. Residue W98 participates in substrate binding. FMN contacts are provided by residues 113 to 119 (STATQHG) and H134. Residues 157-181 (GGAPYGMTTTADGDGSRQPSAQELD) form a disordered region. The span at 163 to 177 (MTTTADGDGSRQPSA) shows a compositional bias: polar residues.

It belongs to the WrbA family. Requires FMN as cofactor.

The enzyme catalyses a quinone + NADH + H(+) = a quinol + NAD(+). The catalysed reaction is a quinone + NADPH + H(+) = a quinol + NADP(+). The protein is NAD(P)H dehydrogenase (quinone) of Brucella melitensis biotype 2 (strain ATCC 23457).